An 89-amino-acid polypeptide reads, in one-letter code: Small ribosomal subunit protein uS15 (89 aa).

Residues 1-24 (MALTQTKKQELISQYQAHETDTGS) form a disordered region.

It belongs to the universal ribosomal protein uS15 family. In terms of assembly, part of the 30S ribosomal subunit. Forms a bridge to the 50S subunit in the 70S ribosome, contacting the 23S rRNA.

In terms of biological role, one of the primary rRNA binding proteins, it binds directly to 16S rRNA where it helps nucleate assembly of the platform of the 30S subunit by binding and bridging several RNA helices of the 16S rRNA. Functionally, forms an intersubunit bridge (bridge B4) with the 23S rRNA of the 50S subunit in the ribosome. This Microcystis aeruginosa (strain NIES-843 / IAM M-2473) protein is Small ribosomal subunit protein uS15.